Here is a 265-residue protein sequence, read N- to C-terminus: Ribosomal RNA small subunit methyltransferase A (265 aa).

S-adenosyl-L-methionine contacts are provided by His17, Leu19, Gly44, Glu65, Asp90, and Asn112.

This sequence belongs to the class I-like SAM-binding methyltransferase superfamily. rRNA adenine N(6)-methyltransferase family. RsmA subfamily.

The protein localises to the cytoplasm. It catalyses the reaction adenosine(1518)/adenosine(1519) in 16S rRNA + 4 S-adenosyl-L-methionine = N(6)-dimethyladenosine(1518)/N(6)-dimethyladenosine(1519) in 16S rRNA + 4 S-adenosyl-L-homocysteine + 4 H(+). Its function is as follows. Specifically dimethylates two adjacent adenosines (A1518 and A1519) in the loop of a conserved hairpin near the 3'-end of 16S rRNA in the 30S particle. May play a critical role in biogenesis of 30S subunits. This is Ribosomal RNA small subunit methyltransferase A from Xylella fastidiosa (strain Temecula1 / ATCC 700964).